The sequence spans 162 residues: Large ribosomal subunit protein eL24 (162 aa).

Disordered stretches follow at residues 64–83 and 117–162; these read DIHA…PYSR and ERIK…GGKR. A compositionally biased stretch (basic residues) spans 71–81; it reads KKRRRTTKKPY. The span at 117–135 shows a compositional bias: basic and acidic residues; it reads ERIKKTKDEKKAKKAEVTK.

It belongs to the eukaryotic ribosomal protein eL24 family.

It localises to the cytoplasm. In Hordeum vulgare (Barley), this protein is Large ribosomal subunit protein eL24 (RPL24).